The following is a 446-amino-acid chain: Tubulin alpha chain-like 3 (446 aa).

Positions 1 to 4 match the MREC motif motif; it reads MREC. Residues glutamine 11, glutamate 78, serine 147, glycine 151, threonine 152, threonine 186, asparagine 213, and asparagine 235 each coordinate GTP. Glutamate 78 is a binding site for Mg(2+). The active site involves glutamate 261.

It belongs to the tubulin family. In terms of assembly, dimer of alpha and beta chains. A typical microtubule is a hollow water-filled tube with an outer diameter of 25 nm and an inner diameter of 15 nM. Alpha-beta heterodimers associate head-to-tail to form protofilaments running lengthwise along the microtubule wall with the beta-tubulin subunit facing the microtubule plus end conferring a structural polarity. Microtubules usually have 13 protofilaments but different protofilament numbers can be found in some organisms and specialized cells. Mg(2+) is required as a cofactor. Some glutamate residues at the C-terminus are polyglycylated, resulting in polyglycine chains on the gamma-carboxyl group. Glycylation is mainly limited to tubulin incorporated into axonemes (cilia and flagella) whereas glutamylation is prevalent in neuronal cells, centrioles, axonemes, and the mitotic spindle. Both modifications can coexist on the same protein on adjacent residues, and lowering polyglycylation levels increases polyglutamylation, and reciprocally. Cilia and flagella glycylation is required for their stability and maintenance. Flagella glycylation controls sperm motility. In terms of processing, some glutamate residues at the C-terminus are polyglutamylated, resulting in polyglutamate chains on the gamma-carboxyl group. Polyglutamylation plays a key role in microtubule severing by spastin (SPAST). SPAST preferentially recognizes and acts on microtubules decorated with short polyglutamate tails: severing activity by SPAST increases as the number of glutamates per tubulin rises from one to eight, but decreases beyond this glutamylation threshold. Glutamylation is also involved in cilia motility.

The protein localises to the cytoplasm. The protein resides in the cytoskeleton. The catalysed reaction is GTP + H2O = GDP + phosphate + H(+). Functionally, tubulin is the major constituent of microtubules, a cylinder consisting of laterally associated linear protofilaments composed of alpha- and beta-tubulin heterodimers. Microtubules grow by the addition of GTP-tubulin dimers to the microtubule end, where a stabilizing cap forms. Below the cap, tubulin dimers are in GDP-bound state, owing to GTPase activity of alpha-tubulin. The sequence is that of Tubulin alpha chain-like 3 (Tubal3) from Mus musculus (Mouse).